Reading from the N-terminus, the 109-residue chain is Thioredoxin (109 aa).

One can recognise a Thioredoxin domain in the interval 2-109; the sequence is ETLLWKDARE…LVEKIKELFK (108 aa). Cys27 and Cys30 form a disulfide bridge.

Belongs to the thioredoxin family.

Its function is as follows. Participates in various redox reactions through the reversible oxidation of its active center dithiol to a disulfide and catalyzes dithiol-disulfide exchange reactions. The polypeptide is Thioredoxin (trxA) (Mycoplasmopsis pulmonis (strain UAB CTIP) (Mycoplasma pulmonis)).